The sequence spans 289 residues: 4-diphosphocytidyl-2-C-methyl-D-erythritol kinase (289 aa).

Lys11 is an active-site residue. 93–103 (PLAAGLAGGSA) provides a ligand contact to ATP. Asp135 is a catalytic residue.

The protein belongs to the GHMP kinase family. IspE subfamily.

It catalyses the reaction 4-CDP-2-C-methyl-D-erythritol + ATP = 4-CDP-2-C-methyl-D-erythritol 2-phosphate + ADP + H(+). The protein operates within isoprenoid biosynthesis; isopentenyl diphosphate biosynthesis via DXP pathway; isopentenyl diphosphate from 1-deoxy-D-xylulose 5-phosphate: step 3/6. Its function is as follows. Catalyzes the phosphorylation of the position 2 hydroxy group of 4-diphosphocytidyl-2C-methyl-D-erythritol. This Thermoanaerobacter sp. (strain X514) protein is 4-diphosphocytidyl-2-C-methyl-D-erythritol kinase.